The primary structure comprises 124 residues: Large ribosomal subunit protein uL22c (124 aa).

The protein belongs to the universal ribosomal protein uL22 family. In terms of assembly, part of the 50S ribosomal subunit.

The protein localises to the plastid. It is found in the chloroplast. In terms of biological role, this protein binds specifically to 23S rRNA. Functionally, the globular domain of the protein is located near the polypeptide exit tunnel on the outside of the subunit, while an extended beta-hairpin is found that lines the wall of the exit tunnel in the center of the 70S ribosome. This is Large ribosomal subunit protein uL22c (rpl22) from Amborella trichopoda.